Reading from the N-terminus, the 459-residue chain is FAD-dependent monooxygenase nanF (459 aa).

The FAD site is built by E49, G62, and R121. Active-site residues include R200 and Y230. D327 and G340 together coordinate FAD.

Belongs to the paxM FAD-dependent monooxygenase family. FAD serves as cofactor.

It functions in the pathway secondary metabolite biosynthesis. Its function is as follows. FAD-dependent monooxygenase; part of the gene cluster that mediates the biosynthesis of the benzazepine alkaloid nanangelenin A which contains an unprecedented 3,4-dihydro-1-benzazepine-2,5-dione-N-prenyl-N-acetoxy-anthranilamide scaffold. The first step of nanangelenin biosynthesis is catalyzed by the indoleamine 2,3-dioxygenase nanC which produces N-formyl-kynurenine through the catabolism of tryptophan. The two-module NRPS nanA then utilizes anthranilate (Ant) and L-kynurenine (L-Kyn) to assemble the dipeptide product nanangelenin B. The first adenylation domain of nanA (A1) loads anthranilate onto the T1 domain, while A2 loads kynurenine, generated through spontaneous nonenzymatic deformylation of the nanC-supplied N-formyl-kynurenine. The peptide bond formation between the tethered amino acids is catalyzed by the first condensation domain (C1) between anthranilate's carbonyl carbon and kynurenine's aliphatic primary amine. The second C domain (C2) catalyzes the final cyclization event between the aromatic amine of kynurenine and the tethered carbonyl carbon, yielding nanangelenin B. The terminal T3 domain enhances the catalytic efficiency of C2, suggesting the T2-tethered Ant-L-Kyn is transferred to T3 prior to cyclization by C2. Once released from nanA, nanangelenin B is then prenylated by the prenyltransferase nanD to form nanangelenin C. Nanangelenin C is then N-hydroxylated by the FAD-dependent monooxygenase nanF and further acetylated by the acetyltransferase nanB to yield nanangelenin F. Finally, the N-methyltransferase nanE methylates the amide nitrogen of 1-benzazepine to convert nanangelenin F into nanangelenin A. NanE is also able to methylate most of the intermediates of the pathway such as nanangelenin B and nanangelenin C to produce nanangelenin D and nanangelenin E, respectively. In Aspergillus nanangensis, this protein is FAD-dependent monooxygenase nanF.